The sequence spans 456 residues: RuvB-like helicase 1 (456 aa).

An ATP-binding site is contributed by Gly70–Thr77.

Belongs to the RuvB family. As to quaternary structure, forms homohexameric rings. May form a dodecamer with rept made of two stacked hexameric rings. Component of the chromatin remodeling Ino80 complex.

It is found in the nucleus. It carries out the reaction ATP + H2O = ADP + phosphate + H(+). Functionally, acts as a transcriptional coactivator in Wg signaling caused by altered arm signaling. Pont and rept interfere antagonistically with nuclear arm signaling function, and are required to enhance or reduce arm activity, respectively. Also an essential cofactor for the normal function of Myc; required for cellular proliferation and growth. Its function is as follows. Proposed core component of the chromatin remodeling Ino80 complex which is involved in transcriptional regulation, DNA replication and probably DNA repair. This chain is RuvB-like helicase 1, found in Drosophila pseudoobscura pseudoobscura (Fruit fly).